Consider the following 106-residue polypeptide: Large ribosomal subunit protein P1B (106 aa).

Ser2 is subject to N-acetylserine. A compositionally biased stretch (low complexity) spans 69-82 (AGAASGAAAAGGDA). Residues 69 to 106 (AGAASGAAAAGGDAAAEEEKEEEAAEESDDDMGFGLFD) form a disordered region. Positions 83–100 (AAEEEKEEEAAEESDDDM) are enriched in acidic residues. Ser96 carries the post-translational modification Phosphoserine.

It belongs to the eukaryotic ribosomal protein P1/P2 family. Component of the large ribosomal subunit (LSU). Mature yeast ribosomes consist of a small (40S) and a large (60S) subunit. The 40S small subunit contains 1 molecule of ribosomal RNA (18S rRNA) and 33 different proteins (encoded by 57 genes). The large 60S subunit contains 3 rRNA molecules (25S, 5.8S and 5S rRNA) and 46 different proteins (encoded by 81 genes). The 5 acidic ribosomal P-proteins form the stalk structure of the 60S subunit. They are organized as a pentameric complex in which uL10/P0 interacts with 2 heterodimers, P1A-P2B and P1B-P2A.

The protein localises to the cytoplasm. Its function is as follows. Component of the ribosome, a large ribonucleoprotein complex responsible for the synthesis of proteins in the cell. The small ribosomal subunit (SSU) binds messenger RNAs (mRNAs) and translates the encoded message by selecting cognate aminoacyl-transfer RNA (tRNA) molecules. The large subunit (LSU) contains the ribosomal catalytic site termed the peptidyl transferase center (PTC), which catalyzes the formation of peptide bonds, thereby polymerizing the amino acids delivered by tRNAs into a polypeptide chain. The nascent polypeptides leave the ribosome through a tunnel in the LSU and interact with protein factors that function in enzymatic processing, targeting, and the membrane insertion of nascent chains at the exit of the ribosomal tunnel. The protein is Large ribosomal subunit protein P1B of Saccharomyces cerevisiae (strain ATCC 204508 / S288c) (Baker's yeast).